Here is a 775-residue protein sequence, read N- to C-terminus: Aconitate hydratase, mitochondrial (775 aa).

A mitochondrion-targeting transit peptide spans 1 to 25; sequence MLTTLARASAMLLGARGFASAADLD. Residues glutamine 95 and 188 to 190 each bind substrate; that span reads DSH. Asparagine 337 carries N-linked (GlcNAc...) asparagine glycosylation. Cysteine 381 contacts [4Fe-4S] cluster. Asparagine 383 carries an N-linked (GlcNAc...) asparagine glycan. [4Fe-4S] cluster is bound by residues cysteine 444 and cysteine 447. Position 470 (arginine 470) interacts with substrate. Asparagine 471 carries N-linked (GlcNAc...) asparagine glycosylation. Residues arginine 475 and arginine 603 each contribute to the substrate site. Asparagine 608 is a glycosylation site (N-linked (GlcNAc...) asparagine). 666 to 667 is a substrate binding site; the sequence is SR. N-linked (GlcNAc...) asparagine glycans are attached at residues asparagine 754 and asparagine 763.

The protein belongs to the aconitase/IPM isomerase family. Monomer. [4Fe-4S] cluster serves as cofactor.

The protein localises to the mitochondrion. It catalyses the reaction citrate = D-threo-isocitrate. It functions in the pathway carbohydrate metabolism; tricarboxylic acid cycle; isocitrate from oxaloacetate: step 2/2. In terms of biological role, catalyzes the isomerization of citrate to isocitrate via cis-aconitate. In Arthroderma benhamiae (strain ATCC MYA-4681 / CBS 112371) (Trichophyton mentagrophytes), this protein is Aconitate hydratase, mitochondrial.